We begin with the raw amino-acid sequence, 704 residues long: Polyribonucleotide nucleotidyltransferase (704 aa).

Mg(2+)-binding residues include Asp-485 and Asp-491. The KH domain maps to 552-611; that stretch reads PKILTMTINPDKIRDVIGPSGKMINKIIEDTGVKIDIEQDGTIYISSADTNMNNKAREII. The S1 motif domain maps to 621-689; that stretch reads GQMYLGTVKR…NQGRVNLSRK (69 aa).

It belongs to the polyribonucleotide nucleotidyltransferase family. Mg(2+) serves as cofactor.

It is found in the cytoplasm. It carries out the reaction RNA(n+1) + phosphate = RNA(n) + a ribonucleoside 5'-diphosphate. In terms of biological role, involved in mRNA degradation. Catalyzes the phosphorolysis of single-stranded polyribonucleotides processively in the 3'- to 5'-direction. In Halalkalibacterium halodurans (strain ATCC BAA-125 / DSM 18197 / FERM 7344 / JCM 9153 / C-125) (Bacillus halodurans), this protein is Polyribonucleotide nucleotidyltransferase.